Reading from the N-terminus, the 236-residue chain is 5'-methylthioadenosine/S-adenosylhomocysteine nucleosidase (236 aa).

Glu-12 serves as the catalytic Proton acceptor. Residues Gly-78, Ile-153, and 174-175 contribute to the substrate site; that span reads ME. Catalysis depends on Asp-198, which acts as the Proton donor.

Belongs to the PNP/UDP phosphorylase family. MtnN subfamily.

The catalysed reaction is S-adenosyl-L-homocysteine + H2O = S-(5-deoxy-D-ribos-5-yl)-L-homocysteine + adenine. The enzyme catalyses S-methyl-5'-thioadenosine + H2O = 5-(methylsulfanyl)-D-ribose + adenine. It carries out the reaction 5'-deoxyadenosine + H2O = 5-deoxy-D-ribose + adenine. It functions in the pathway amino-acid biosynthesis; L-methionine biosynthesis via salvage pathway; S-methyl-5-thio-alpha-D-ribose 1-phosphate from S-methyl-5'-thioadenosine (hydrolase route): step 1/2. Its function is as follows. Catalyzes the irreversible cleavage of the glycosidic bond in both 5'-methylthioadenosine (MTA) and S-adenosylhomocysteine (SAH/AdoHcy) to adenine and the corresponding thioribose, 5'-methylthioribose and S-ribosylhomocysteine, respectively. Also cleaves 5'-deoxyadenosine, a toxic by-product of radical S-adenosylmethionine (SAM) enzymes, into 5-deoxyribose and adenine. This chain is 5'-methylthioadenosine/S-adenosylhomocysteine nucleosidase, found in Shewanella oneidensis (strain ATCC 700550 / JCM 31522 / CIP 106686 / LMG 19005 / NCIMB 14063 / MR-1).